Consider the following 859-residue polypeptide: DNA mismatch repair protein MutS (859 aa).

618–625 (GPNMGGKS) lines the ATP pocket.

Belongs to the DNA mismatch repair MutS family.

Functionally, this protein is involved in the repair of mismatches in DNA. It is possible that it carries out the mismatch recognition step. This protein has a weak ATPase activity. The protein is DNA mismatch repair protein MutS of Shewanella halifaxensis (strain HAW-EB4).